The primary structure comprises 1249 residues: Clustered mitochondria protein homolog (1249 aa).

Residues 1 to 32 (MAQTNGELEHSKETPEQLTNGNHPEETQEEDN) are disordered. The 245-residue stretch at 318-562 (DITRSQENYL…RVTPLDVMWQ (245 aa)) folds into the Clu domain. A compositionally biased stretch (basic and acidic residues) spans 605–628 (KAEADAAKAESSEATESKEQASEE). Disordered stretches follow at residues 605 to 636 (KAEADAAKAESSEATESKEQASEEKSEEDQER) and 868 to 903 (KAPATNGANGVAQEEGKNKKKKKGGDSSSPARAAKE). 3 TPR repeats span residues 974-1007 (AKLYHQLSMLYYQTDEKEAAVELARKAVIVTERT), 1016-1049 (ILSYLNLSLFEHASGNTKTALAYIKHAMDLWKII), and 1058-1091 (ITTMNNAAVMLQHLKQYSDSRKWFEASLEVCESL). Positions 1174–1249 (NMNPRSLGTK…KLRGSKKSSA (76 aa)) are disordered. Over residues 1176–1190 (NPRSLGTKIQPQVGQ) the composition is skewed to polar residues.

The protein belongs to the CLU family. In terms of assembly, may associate with the eukaryotic translation initiation factor 3 (eIF-3) complex.

Its subcellular location is the cytoplasm. In terms of biological role, mRNA-binding protein involved in proper cytoplasmic distribution of mitochondria. This is Clustered mitochondria protein homolog from Aspergillus niger (strain ATCC MYA-4892 / CBS 513.88 / FGSC A1513).